The chain runs to 146 residues: ATP synthase epsilon chain (146 aa).

Belongs to the ATPase epsilon chain family. F-type ATPases have 2 components, CF(1) - the catalytic core - and CF(0) - the membrane proton channel. CF(1) has five subunits: alpha(3), beta(3), gamma(1), delta(1), epsilon(1). CF(0) has three main subunits: a, b and c.

The protein resides in the cell inner membrane. Functionally, produces ATP from ADP in the presence of a proton gradient across the membrane. The polypeptide is ATP synthase epsilon chain (Rhodospirillum centenum (strain ATCC 51521 / SW)).